A 249-amino-acid chain; its full sequence is Putative S-adenosyl-L-methionine-dependent methyltransferase Mkms_0592 (249 aa).

S-adenosyl-L-methionine contacts are provided by residues aspartate 111 and 141–142 (DL).

Belongs to the UPF0677 family.

In terms of biological role, exhibits S-adenosyl-L-methionine-dependent methyltransferase activity. This Mycobacterium sp. (strain KMS) protein is Putative S-adenosyl-L-methionine-dependent methyltransferase Mkms_0592.